Reading from the N-terminus, the 401-residue chain is Chalcone synthase 4 (401 aa).

Cys168 is an active-site residue.

Belongs to the thiolase-like superfamily. Chalcone/stilbene synthases family.

The catalysed reaction is (E)-4-coumaroyl-CoA + 3 malonyl-CoA + 3 H(+) = 2',4,4',6'-tetrahydroxychalcone + 3 CO2 + 4 CoA. It participates in secondary metabolite biosynthesis; flavonoid biosynthesis. Its function is as follows. The primary product of this enzyme is 4,2',4',6'-tetrahydroxychalcone (also termed naringenin-chalcone or chalcone) which can under specific conditions spontaneously isomerize into naringenin. The protein is Chalcone synthase 4 (CHS4) of Sorghum bicolor (Sorghum).